We begin with the raw amino-acid sequence, 292 residues long: Nitrogenase iron protein 2 (292 aa).

Residue 8–15 (GKGGIGKS) participates in ATP binding. C106 contacts [4Fe-4S] cluster. An ADP-ribosylarginine; by dinitrogenase reductase ADP-ribosyltransferase modification is found at R109. C142 is a binding site for [4Fe-4S] cluster.

This sequence belongs to the NifH/BchL/ChlL family. Homodimer. [4Fe-4S] cluster is required as a cofactor. Post-translationally, the reversible ADP-ribosylation of Arg-109 inactivates the nitrogenase reductase and regulates nitrogenase activity.

It carries out the reaction N2 + 8 reduced [2Fe-2S]-[ferredoxin] + 16 ATP + 16 H2O = H2 + 8 oxidized [2Fe-2S]-[ferredoxin] + 2 NH4(+) + 16 ADP + 16 phosphate + 6 H(+). Its function is as follows. The key enzymatic reactions in nitrogen fixation are catalyzed by the nitrogenase complex, which has 2 components: the iron protein and the molybdenum-iron protein. This chain is Nitrogenase iron protein 2 (nifH2), found in Methanothermococcus thermolithotrophicus (Methanococcus thermolithotrophicus).